Reading from the N-terminus, the 179-residue chain is MKKDLTNIYLIGLMGAGKTSVGSQLAKLTKRILYDSDKEIEKRTGADIAWIFEMEGEAGFRRREREMIEALCKLDNIILATGGGVVLDEKNRQQISETGVVIYLTASIDTQLKRIGQKGEMRRPLFIKNNSKEKLQQLNEIRKPLYQAMADLVYPTDDLNPRQLATQILVDIKQTYSDL.

15–20 (GAGKTS) provides a ligand contact to ATP. Thr-19 is a Mg(2+) binding site. Substrate-binding residues include Asp-37, Arg-61, and Gly-83. Arg-122 lines the ATP pocket. Residue Arg-142 coordinates substrate.

The protein belongs to the shikimate kinase family. Monomer. It depends on Mg(2+) as a cofactor.

It is found in the cytoplasm. It carries out the reaction shikimate + ATP = 3-phosphoshikimate + ADP + H(+). It functions in the pathway metabolic intermediate biosynthesis; chorismate biosynthesis; chorismate from D-erythrose 4-phosphate and phosphoenolpyruvate: step 5/7. Its function is as follows. Catalyzes the specific phosphorylation of the 3-hydroxyl group of shikimic acid using ATP as a cosubstrate. The sequence is that of Shikimate kinase from Coxiella burnetii (strain RSA 331 / Henzerling II).